A 68-amino-acid polypeptide reads, in one-letter code: Serine rich endogenous peptide 13 (68 aa).

The signal sequence occupies residues 1 to 31 (MATKASNLVVFLLSLLLLFLLISFQVGVADA). The tract at residues 33 to 68 (RNKRQGQEQRVDYDYPRPPTAPIYLPPSKSRKGKGP) is disordered. Basic and acidic residues predominate over residues 37 to 47 (QGQEQRVDYDY). The segment covering 48 to 57 (PRPPTAPIYL) has biased composition (pro residues). Positions 54-68 (PIYLPPSKSRKGKGP) match the SCOOP motif motif. The short motif at 60–62 (SKS) is the SxS motif essential for MIK2 binding element.

This sequence belongs to the serine rich endogenous peptide (SCOOP) phytocytokine family. Interacts with MIK2 (via extracellular leucine-rich repeat domain); this interaction triggers the formation of complex between MIK2 and the BAK1/SERK3 and SERK4 coreceptors, and subsequent BAK1 activation by phosphorylation. Mostly expressed in stems and flowers and, to a lower extent, in seedlings shoots, roots, siliques, seeds and leaves.

The protein resides in the cell membrane. It is found in the secreted. Its subcellular location is the extracellular space. The protein localises to the apoplast. Functionally, brassicaceae-specific phytocytokine (plant endogenous peptide released into the apoplast) perceived by MIK2 in a BAK1/SERK3 and SERK4 coreceptors-dependent manner, that modulates various physiological and antimicrobial processes including growth prevention and reactive oxygen species (ROS) response regulation. Promotes the expression of immune-related marker genes (e.g. WRKY30, WRKY33 and CYP81F2) in a MIK2-dependent manner. Inhibits root growth and regulates root meristems. Prevents general growth and development. Exhibits antibacterial effects against Pseudomonas syringae pv. tomato DC3000, Ralstonia solanacearum, Bacillus subtilis and Agrobacterium tumefaciens, thus being an antimicrobial peptide (AMP). The polypeptide is Serine rich endogenous peptide 13 (Arabidopsis thaliana (Mouse-ear cress)).